Consider the following 534-residue polypeptide: SWI/SNF complex component SNF12 homolog (534 aa).

The segment covering 1-12 (MSGNNNNPQKPQ) has biased composition (polar residues). 2 disordered regions span residues 1-33 (MSGNNNNPQKPQGSAPLPFGNPGMASASVPGNQ) and 78-132 (MTMN…SPMR). Positions 94-105 (PSSPSLTTPGSL) are enriched in low complexity. Positions 314–391 (YVPEKFKLST…SQKISHHLSP (78 aa)) constitute an SWIB/MDM2 domain.

Belongs to the SMARCD family. As to quaternary structure, part of a SWI-SNF complex.

The protein resides in the nucleus. Functionally, involved in transcriptional activation and repression of select genes by chromatin remodeling (alteration of DNA-nucleosome topology). The sequence is that of SWI/SNF complex component SNF12 homolog from Arabidopsis thaliana (Mouse-ear cress).